Consider the following 370-residue polypeptide: Coiled-coil domain-containing protein 89 (370 aa).

Residues 1-21 (MPQEEKTLRMDTPPPDEILGK) are disordered. Thr12 carries the post-translational modification Phosphothreonine. A coiled-coil region spans residues 36 to 346 (KEMDGLREAL…YDELRLQSEA (311 aa)).

Belongs to the CCDC89 family. In terms of assembly, interacts with HEY1. In terms of tissue distribution, expression is restricted to the adult testis, where localization is almost exclusive to round spermatids.

The protein localises to the cytoplasm. It is found in the nucleus. The polypeptide is Coiled-coil domain-containing protein 89 (Mus musculus (Mouse)).